The sequence spans 715 residues: Probable ubiquitin thioesterase DG1039 (715 aa).

Residues 86–302 (KSRNEIKRKA…NNQTDDKLDN (217 aa)) adopt a coiled-coil conformation. Basic and acidic residues predominate over residues 287–302 (NKKLENNNQTDDKLDN). Disordered stretches follow at residues 287 to 367 (NKKL…YNST), 398 to 450 (QYKQ…QQQY), and 502 to 527 (LAQSPAVNTPSITPTTNKPNIDSSEA). The segment covering 339–349 (TTAQLPLSITQ) has biased composition (polar residues). Low complexity predominate over residues 398–409 (QYKQQQQQQPIQ). Polar residues-rich tracts occupy residues 410-427 (SPTNNINRPNIPQYNNYN) and 502-525 (LAQSPAVNTPSITPTTNKPNIDSS). In terms of domain architecture, MPN spans 537–666 (IIVHGEVFQE…IFRLTDPPGL (130 aa)). 7 residues coordinate Zn(2+): H615, H617, D628, H630, C672, H678, and H680. The JAMM motif signature appears at 615–628 (HTHPTQDCFLSAVD).

The protein belongs to the peptidase M67C family. The cofactor is Zn(2+).

May be a zinc metalloprotease that specifically cleaves ubiquitin chains. This Dictyostelium discoideum (Social amoeba) protein is Probable ubiquitin thioesterase DG1039 (DG1039).